A 526-amino-acid chain; its full sequence is Peptide chain release factor 3 (526 aa).

Residues 9 to 277 (DKRRTFAIIS…GIVEWAPKPL (269 aa)) enclose the tr-type G domain. Residues 18–25 (SHPDAGKT), 86–90 (DTPGH), and 140–143 (NKCD) each bind GTP.

Belongs to the TRAFAC class translation factor GTPase superfamily. Classic translation factor GTPase family. PrfC subfamily.

It is found in the cytoplasm. In terms of biological role, increases the formation of ribosomal termination complexes and stimulates activities of RF-1 and RF-2. It binds guanine nucleotides and has strong preference for UGA stop codons. It may interact directly with the ribosome. The stimulation of RF-1 and RF-2 is significantly reduced by GTP and GDP, but not by GMP. This chain is Peptide chain release factor 3, found in Shewanella frigidimarina (strain NCIMB 400).